The primary structure comprises 180 residues: MSRFLVRLSTVVSKGATGKSVLPQKRIFAGIRLISSSTGLQSLTRYDQSTDWQRKLSPEQYVVTREKGTEVPFSGIYLNHNEVGMYHCVCCDSPLFSSEAKYDAGAGWPSFCEAHGTWEKDESHANIVRRPDNSLGSTGTEVICKHCDAHLGHVFEDGPDPTGQRFCINSVALNFKPREK.

A mitochondrion-targeting transit peptide spans 1 to 41 (MSRFLVRLSTVVSKGATGKSVLPQKRIFAGIRLISSSTGLQ). Positions 49-178 (STDWQRKLSP…NSVALNFKPR (130 aa)) constitute a MsrB domain. Zn(2+) contacts are provided by Cys88, Cys91, Cys144, and Cys147. Residue Cys167 is the Nucleophile of the active site.

The protein belongs to the MsrB Met sulfoxide reductase family. Zn(2+) serves as cofactor.

The protein resides in the mitochondrion. It carries out the reaction L-methionyl-[protein] + [thioredoxin]-disulfide + H2O = L-methionyl-(R)-S-oxide-[protein] + [thioredoxin]-dithiol. The enzyme catalyses [thioredoxin]-disulfide + L-methionine + H2O = L-methionine (R)-S-oxide + [thioredoxin]-dithiol. In terms of biological role, methionine-sulfoxide reductase that specifically reduces methionine (R)-sulfoxide back to methionine. While in many cases, methionine oxidation is the result of random oxidation following oxidative stress, methionine oxidation is also a post-translational modification that takes place on specific residue. Upon oxidative stress, may play a role in the preservation of mitochondrial integrity by decreasing the intracellular reactive oxygen species build-up through its scavenging role, hence contributing to cell survival and protein maintenance. This Danio rerio (Zebrafish) protein is Methionine-R-sulfoxide reductase B2, mitochondrial (msrb2).